We begin with the raw amino-acid sequence, 72 residues long: Large ribosomal subunit protein bL28 (72 aa).

Belongs to the bacterial ribosomal protein bL28 family.

The sequence is that of Large ribosomal subunit protein bL28 from Chlorobium luteolum (strain DSM 273 / BCRC 81028 / 2530) (Pelodictyon luteolum).